Here is a 104-residue protein sequence, read N- to C-terminus: DNA-directed RNA polymerase subunit omega (104 aa).

Residues 60-104 (VIHPDPEGKREAVRRRAEEERLRKEEEERKIKEQIAKEKEEGEKI) are disordered. The segment covering 63–104 (PDPEGKREAVRRRAEEERLRKEEEERKIKEQIAKEKEEGEKI) has biased composition (basic and acidic residues).

This sequence belongs to the RNA polymerase subunit omega family. In terms of assembly, the RNAP catalytic core consists of 2 alpha, 1 beta, 1 beta' and 1 omega subunit. When a sigma factor is associated with the core the holoenzyme is formed, which can initiate transcription.

It carries out the reaction RNA(n) + a ribonucleoside 5'-triphosphate = RNA(n+1) + diphosphate. Its function is as follows. Promotes RNA polymerase assembly. Latches the N- and C-terminal regions of the beta' subunit thereby facilitating its interaction with the beta and alpha subunits. This chain is DNA-directed RNA polymerase subunit omega, found in Streptococcus sanguinis (strain SK36).